A 333-amino-acid chain; its full sequence is tRNA N6-adenosine threonylcarbamoyltransferase (333 aa).

Residues histidine 110 and histidine 114 each contribute to the Fe cation site. Substrate-binding positions include 133 to 137 (IVSGG), aspartate 166, glycine 179, aspartate 183, and asparagine 275. Position 302 (aspartate 302) interacts with Fe cation.

This sequence belongs to the KAE1 / TsaD family. The cofactor is Fe(2+).

It localises to the cytoplasm. The enzyme catalyses L-threonylcarbamoyladenylate + adenosine(37) in tRNA = N(6)-L-threonylcarbamoyladenosine(37) in tRNA + AMP + H(+). Its function is as follows. Required for the formation of a threonylcarbamoyl group on adenosine at position 37 (t(6)A37) in tRNAs that read codons beginning with adenine. Is involved in the transfer of the threonylcarbamoyl moiety of threonylcarbamoyl-AMP (TC-AMP) to the N6 group of A37, together with TsaE and TsaB. TsaD likely plays a direct catalytic role in this reaction. The protein is tRNA N6-adenosine threonylcarbamoyltransferase of Thermodesulfovibrio yellowstonii (strain ATCC 51303 / DSM 11347 / YP87).